The primary structure comprises 442 residues: tRNA modification GTPase MnmE (442 aa).

3 residues coordinate (6S)-5-formyl-5,6,7,8-tetrahydrofolate: Arg27, Glu84, and Lys124. The region spanning 221 to 366 is the TrmE-type G domain; the sequence is GLHVVIVGAP…LLDALQAFAE (146 aa). Residues 231–236, 250–256, and 275–278 each bind GTP; these read NAGKSS, SKEAGTT, and DTAG. Positions 235 and 256 each coordinate Mg(2+). Residue Lys442 participates in (6S)-5-formyl-5,6,7,8-tetrahydrofolate binding.

The protein belongs to the TRAFAC class TrmE-Era-EngA-EngB-Septin-like GTPase superfamily. TrmE GTPase family. Homodimer. Heterotetramer of two MnmE and two MnmG subunits. It depends on K(+) as a cofactor.

The protein localises to the cytoplasm. Its function is as follows. Exhibits a very high intrinsic GTPase hydrolysis rate. Involved in the addition of a carboxymethylaminomethyl (cmnm) group at the wobble position (U34) of certain tRNAs, forming tRNA-cmnm(5)s(2)U34. The sequence is that of tRNA modification GTPase MnmE from Brucella suis biovar 1 (strain 1330).